Consider the following 355-residue polypeptide: Proto-oncogene Wnt-3 (355 aa).

The first 21 residues, 1 to 21, serve as a signal peptide directing secretion; it reads MEPHLLGLLLGLLLSGTRVLA. Cystine bridges form between C80-C91, C131-C139, C141-C158, C206-C220, C208-C215, C284-C315, C300-C310, C314-C354, C330-C345, C332-C342, and C337-C338. N90 carries N-linked (GlcNAc...) asparagine glycosylation. S212 carries the O-palmitoleoyl serine; by PORCN lipid modification. A glycan (N-linked (GlcNAc...) asparagine) is linked at N301.

The protein belongs to the Wnt family. As to quaternary structure, forms a soluble 1:1 complex with AFM; this prevents oligomerization and is required for prolonged biological activity. The complex with AFM may represent the physiological form in body fluids. Interacts with PORCN. Interacts with WLS. In terms of processing, palmitoleoylation is required for efficient binding to frizzled receptors. Depalmitoleoylation leads to Wnt signaling pathway inhibition. Detected at low levels in adult brain. Dorsal portion of the neural tube, dorsal ectoderm, the branchial arches, and the limb buds.

The protein resides in the secreted. It localises to the extracellular space. It is found in the extracellular matrix. Functionally, ligand for members of the frizzled family of seven transmembrane receptors. Functions in the canonical Wnt signaling pathway that results in activation of transcription factors of the TCF/LEF family. Required for normal gastrulation, formation of the primitive streak, and for the formation of the mesoderm during early embryogenesis. Required for normal formation of the apical ectodermal ridge and for normal embryonic limb development. This Mus musculus (Mouse) protein is Proto-oncogene Wnt-3 (Wnt3).